Consider the following 413-residue polypeptide: GDP-mannose-dependent alpha-mannosyltransferase (413 aa).

It belongs to the glycosyltransferase group 1 family.

It participates in phospholipid metabolism; phosphatidylinositol metabolism. Functionally, catalyzes the addition of a mannose residue from GDP-D-mannose to GlcAGroAc2 to generate 1,2-di-O-C16/C18:1-(alpha-D-mannopyranosyl)-(1-4)-(alpha-D-glucopyranosyluronic acid)-(1-3)-glycerol(ManGlcAGroAc2). This chain is GDP-mannose-dependent alpha-mannosyltransferase (mgtA), found in Corynebacterium glutamicum (strain ATCC 13032 / DSM 20300 / JCM 1318 / BCRC 11384 / CCUG 27702 / LMG 3730 / NBRC 12168 / NCIMB 10025 / NRRL B-2784 / 534).